We begin with the raw amino-acid sequence, 205 residues long: Glycerol-3-phosphate acyltransferase (205 aa).

The next 6 helical transmembrane spans lie at 5 to 25 (LALG…GYLA), 54 to 74 (GPAA…VWLA), 87 to 107 (IVLG…WLAF), 117 to 137 (VGLL…VWGV), 138 to 158 (CFAV…ATPL), and 162 to 182 (LWRA…YIVW).

This sequence belongs to the PlsY family. As to quaternary structure, probably interacts with PlsX.

It is found in the cell inner membrane. It carries out the reaction an acyl phosphate + sn-glycerol 3-phosphate = a 1-acyl-sn-glycero-3-phosphate + phosphate. It functions in the pathway lipid metabolism; phospholipid metabolism. Its function is as follows. Catalyzes the transfer of an acyl group from acyl-phosphate (acyl-PO(4)) to glycerol-3-phosphate (G3P) to form lysophosphatidic acid (LPA). This enzyme utilizes acyl-phosphate as fatty acyl donor, but not acyl-CoA or acyl-ACP. This Gloeobacter violaceus (strain ATCC 29082 / PCC 7421) protein is Glycerol-3-phosphate acyltransferase.